The primary structure comprises 333 residues: GTPase Obg (333 aa).

An Obg domain is found at 4–162; sequence GNFVDYVKIY…MDVILELKVL (159 aa). The 170-residue stretch at 163 to 332 folds into the OBG-type G domain; it reads ADVGLVGFPN…LKDKLWKMLN (170 aa). GTP-binding positions include 169 to 176, 194 to 198, 216 to 219, 283 to 286, and 313 to 315; these read GFPNAGKS, FTTLK, DIPG, SKCD, and SSV. The Mg(2+) site is built by S176 and T196.

It belongs to the TRAFAC class OBG-HflX-like GTPase superfamily. OBG GTPase family. In terms of assembly, monomer. The cofactor is Mg(2+).

It localises to the cytoplasm. In terms of biological role, an essential GTPase which binds GTP, GDP and possibly (p)ppGpp with moderate affinity, with high nucleotide exchange rates and a fairly low GTP hydrolysis rate. Plays a role in control of the cell cycle, stress response, ribosome biogenesis and in those bacteria that undergo differentiation, in morphogenesis control. The protein is GTPase Obg of Flavobacterium johnsoniae (strain ATCC 17061 / DSM 2064 / JCM 8514 / BCRC 14874 / CCUG 350202 / NBRC 14942 / NCIMB 11054 / UW101) (Cytophaga johnsonae).